Reading from the N-terminus, the 281-residue chain is Bifunctional protein FolD (281 aa).

Residues Gly165 to Gly167, Thr192, and Val233 contribute to the NADP(+) site.

Belongs to the tetrahydrofolate dehydrogenase/cyclohydrolase family. As to quaternary structure, homodimer.

The enzyme catalyses (6R)-5,10-methylene-5,6,7,8-tetrahydrofolate + NADP(+) = (6R)-5,10-methenyltetrahydrofolate + NADPH. It carries out the reaction (6R)-5,10-methenyltetrahydrofolate + H2O = (6R)-10-formyltetrahydrofolate + H(+). The protein operates within one-carbon metabolism; tetrahydrofolate interconversion. Functionally, catalyzes the oxidation of 5,10-methylenetetrahydrofolate to 5,10-methenyltetrahydrofolate and then the hydrolysis of 5,10-methenyltetrahydrofolate to 10-formyltetrahydrofolate. This is Bifunctional protein FolD from Mycolicibacterium paratuberculosis (strain ATCC BAA-968 / K-10) (Mycobacterium paratuberculosis).